The chain runs to 354 residues: Deoxyribonuclease-2-beta (354 aa).

An N-terminal signal peptide occupies residues 1–22; the sequence is MTAKPLRTVLSLLFFALSGVLG. N-linked (GlcNAc...) asparagine glycosylation is found at Asn-70, Asn-77, Asn-95, Asn-98, Asn-114, Asn-129, Asn-208, Asn-271, and Asn-319.

The protein belongs to the DNase II family. Highly expressed in the eye lens. Detected in liver, but not in the other tissues tested.

The protein resides in the lysosome. The catalysed reaction is Endonucleolytic cleavage to nucleoside 3'-phosphates and 3'-phosphooligonucleotide end-products.. Functionally, hydrolyzes DNA under acidic conditions. Does not require divalent cations for activity. Participates in the degradation of nuclear DNA during lens cell differentiation. In Mus musculus (Mouse), this protein is Deoxyribonuclease-2-beta (Dnase2b).